Reading from the N-terminus, the 243-residue chain is UPF0246 protein MGAS9429_Spy1799 (243 aa).

This sequence belongs to the UPF0246 family.

This chain is UPF0246 protein MGAS9429_Spy1799, found in Streptococcus pyogenes serotype M12 (strain MGAS9429).